A 553-amino-acid chain; its full sequence is 4-coumarate--CoA ligase (553 aa).

ATP contacts are provided by S198, S199, G200, T201, T202, and K206. (E)-4-coumaroyl-AMP-binding residues include Y248 and S252. A CoA-binding site is contributed by K269. Residues E271–Q340 form an SBD1 region. (E)-4-coumaroyl-AMP is bound by residues A318, Q340, G341, T345, and M353. ATP-binding residues include Q340, G341, and T345. The segment at G341–Y408 is SBD2. The ATP site is built by D429 and R444. (E)-4-coumaroyl-AMP-binding residues include K446 and K450. K452 and G453 together coordinate CoA. Position 535 (K535) interacts with ATP.

The protein belongs to the ATP-dependent AMP-binding enzyme family. Mg(2+) serves as cofactor.

It carries out the reaction (E)-4-coumarate + ATP + CoA = (E)-4-coumaroyl-CoA + AMP + diphosphate. It catalyses the reaction (E)-4-coumarate + ATP + H(+) = (E)-4-coumaroyl-AMP + diphosphate. The catalysed reaction is (E)-4-coumaroyl-AMP + CoA = (E)-4-coumaroyl-CoA + AMP + H(+). Its pathway is phytoalexin biosynthesis; 3,4',5-trihydroxystilbene biosynthesis; 3,4',5-trihydroxystilbene from trans-4-coumarate: step 1/2. Functionally, carboxylate--CoA ligase that may use 4-coumarate as substrate. Follows a two-step reaction mechanism, wherein the carboxylate substrate first undergoes adenylation by ATP, followed by a thioesterification in the presence of CoA to yield the final CoA thioester. The sequence is that of 4-coumarate--CoA ligase from Vanilla planifolia (Vanilla).